A 370-amino-acid polypeptide reads, in one-letter code: Putative glutamate--cysteine ligase 2 (370 aa).

It belongs to the glutamate--cysteine ligase type 2 family. YbdK subfamily.

The enzyme catalyses L-cysteine + L-glutamate + ATP = gamma-L-glutamyl-L-cysteine + ADP + phosphate + H(+). Its function is as follows. ATP-dependent carboxylate-amine ligase which exhibits weak glutamate--cysteine ligase activity. This Herminiimonas arsenicoxydans protein is Putative glutamate--cysteine ligase 2.